Here is a 184-residue protein sequence, read N- to C-terminus: ATP synthase subunit b, chloroplastic (184 aa).

The chain crosses the membrane as a helical span at residues 27 to 49 (LATNLINLSVVFGVLIFFGKGVL).

Belongs to the ATPase B chain family. As to quaternary structure, F-type ATPases have 2 components, F(1) - the catalytic core - and F(0) - the membrane proton channel. F(1) has five subunits: alpha(3), beta(3), gamma(1), delta(1), epsilon(1). F(0) has four main subunits: a(1), b(1), b'(1) and c(10-14). The alpha and beta chains form an alternating ring which encloses part of the gamma chain. F(1) is attached to F(0) by a central stalk formed by the gamma and epsilon chains, while a peripheral stalk is formed by the delta, b and b' chains.

The protein resides in the plastid. It is found in the chloroplast thylakoid membrane. Its function is as follows. F(1)F(0) ATP synthase produces ATP from ADP in the presence of a proton or sodium gradient. F-type ATPases consist of two structural domains, F(1) containing the extramembraneous catalytic core and F(0) containing the membrane proton channel, linked together by a central stalk and a peripheral stalk. During catalysis, ATP synthesis in the catalytic domain of F(1) is coupled via a rotary mechanism of the central stalk subunits to proton translocation. Functionally, component of the F(0) channel, it forms part of the peripheral stalk, linking F(1) to F(0). The sequence is that of ATP synthase subunit b, chloroplastic from Aethionema cordifolium (Lebanon stonecress).